Consider the following 408-residue polypeptide: MKRAFLIVLDSFGIGATKDAHRFGDVGANTFGNIAKFCFLNKANNYGRKGLLYIPHLLSLGLAKVAIASSGQDLLGIQDTNNVIGSYAYSNEISSGKDTSSGHWEIAGAPVLFDWDYFSSSLNSVPKYLIQDIVDQCNLSGFLGNCHASGTDILDRFGEIHISTKKPILYTSIDSVCQIACHESIFGLKRLYNLCRSIRKIFDKRKINIARIIARPFTGFKKEHFRRTGNRRDFSMEPHKITVMEKLIGEKKGRVIAIGKISDIYAGKGISCSMYATGLVNLFNTTIQEIKNAKNNTIVFVNFVDFDSLWGHRRDVSGYAKDLEWFDYNLPKLLKLVHNEDLLIITADHGCDPTWIGTDHTRENVPILIYQRSMESKNFGYRETFSDIGQTLAKYFNLSTMSYGTSIF.

Mn(2+)-binding residues include aspartate 10, aspartate 307, histidine 312, aspartate 348, histidine 349, and histidine 360.

This sequence belongs to the phosphopentomutase family. Requires Mn(2+) as cofactor.

It localises to the cytoplasm. The enzyme catalyses 2-deoxy-alpha-D-ribose 1-phosphate = 2-deoxy-D-ribose 5-phosphate. It carries out the reaction alpha-D-ribose 1-phosphate = D-ribose 5-phosphate. The protein operates within carbohydrate degradation; 2-deoxy-D-ribose 1-phosphate degradation; D-glyceraldehyde 3-phosphate and acetaldehyde from 2-deoxy-alpha-D-ribose 1-phosphate: step 1/2. In terms of biological role, isomerase that catalyzes the conversion of deoxy-ribose 1-phosphate (dRib-1-P) and ribose 1-phosphate (Rib-1-P) to deoxy-ribose 5-phosphate (dRib-5-P) and ribose 5-phosphate (Rib-5-P), respectively. The polypeptide is Phosphopentomutase (Buchnera aphidicola subsp. Baizongia pistaciae (strain Bp)).